Consider the following 502-residue polypeptide: MSEQEVKELDLNGEMLVRREKLSALRAKGNAFPNKFRRDALAQDLHNQYDSEDGEILKEKGVEVQVAGRIMTRRAMGKATFITIQDMSGKIQLYVARDNLPEGVYAEDVGNWDLGDIIGVKGTLFKTKTNELTIKTTEVQLLTKALRPLPDKFHGLTDQEVRYRQRYLDLISNEESRRTFIIRSKVVAGIREYFISKGFMEVETPMLQVIPGGASARPFVTHHNALDVDMYLRIAPELYLKRLVVGGFERVFELNRNFRNEGVSVRHNPEFTMLEYYQAYADYHDLMDNTEELLRKLAIDILGTTIVKYGDLEFDFGKPFERITLHDATVKYGADKGIVKEDLYDFDRAKATAERLGIEVQKSWGLGSIVNAIFEEVAEHHLIQPTFLMAHPAEISPLARRNDENPEVTDRFELFIGGREIGNGFSELNDAEDQNERFDAQVAAKEAGDDEAMFKDEDFVVALEHGLPPTAGEGLGIDRLAMLYANAPSIRDVILFPAMRQK.

The Mg(2+) site is built by glutamate 413 and glutamate 420.

This sequence belongs to the class-II aminoacyl-tRNA synthetase family. As to quaternary structure, homodimer. Mg(2+) serves as cofactor.

It is found in the cytoplasm. It carries out the reaction tRNA(Lys) + L-lysine + ATP = L-lysyl-tRNA(Lys) + AMP + diphosphate. The protein is Lysine--tRNA ligase of Haemophilus influenzae (strain PittEE).